Here is a 179-residue protein sequence, read N- to C-terminus: GTP-dependent dephospho-CoA kinase (179 aa).

Asp-55, Val-57, Asp-74, Lys-76, and Glu-128 together coordinate GTP.

This sequence belongs to the GTP-dependent DPCK family.

It catalyses the reaction 3'-dephospho-CoA + GTP = GDP + CoA + H(+). The protein operates within cofactor biosynthesis; coenzyme A biosynthesis. Its function is as follows. Catalyzes the GTP-dependent phosphorylation of the 3'-hydroxyl group of dephosphocoenzyme A to form coenzyme A (CoA). The polypeptide is GTP-dependent dephospho-CoA kinase (Saccharolobus islandicus (strain M.16.27) (Sulfolobus islandicus)).